The chain runs to 340 residues: CMP-sialic acid transporter 1 (340 aa).

Over 1-5 (MAATP) the chain is Cytoplasmic. Residues 6–26 (WYFVAVLLTILTSSQGILTTL) traverse the membrane as a helical segment. Residues 27-36 (SQSDGGYKYD) lie on the Lumenal side of the membrane. A helical membrane pass occupies residues 37-57 (YATVPFLAEVFKLIISGLFLW). Over 58-78 (REMRTSSSTTSRITTDWKSVR) the chain is Cytoplasmic. A helical transmembrane segment spans residues 79 to 99 (LFVIPSLIYLIHNNVQFATLT). The Lumenal portion of the chain corresponds to 100–102 (YVD). Residues 103 to 125 (TSTYQIMGNLKIVTTGILFRLFL) form a helical membrane-spanning segment. The Cytoplasmic portion of the chain corresponds to 126-168 (KRKLSKLQWMAIGLLAVGTTTSQVKGCGEASCDSLFTAPIQGY). A helical membrane pass occupies residues 169 to 189 (LLGILSAGLSALAGIYTEFLM). The Lumenal portion of the chain corresponds to 190–200 (KRNNDTLYWQN). The helical transmembrane segment at 201 to 217 (LQLYTFGSLFNVARLIA) threads the bilayer. Residues 218–238 (DDFRHGFEKGPWWQRIFDGYS) lie on the Cytoplasmic side of the membrane. Residues 239–259 (ITTWLVVLNLGSTGLLVSWLM) form a helical membrane-spanning segment. Over 260–282 (KYADNIVKVYSTSMAMLLTMVAS) the chain is Lumenal. A helical membrane pass occupies residues 283–303 (IYLFSFKPTLQLFLGIVICIM). Residues 304–340 (SLHMYFAPPHTLVDLPVTNEAHAKTLKQVVVEEKTDS) are Cytoplasmic-facing.

It belongs to the nucleotide-sugar transporter family. CMP-Sialate:CMP antiporter (TC 2.A.7.12) subfamily.

The protein localises to the golgi apparatus membrane. In terms of biological role, essential protein. Sugar transporter involved in the transport of CMP-sialic acid from the cytoplasm into the Golgi. The protein is CMP-sialic acid transporter 1 of Arabidopsis thaliana (Mouse-ear cress).